A 642-amino-acid chain; its full sequence is Extracellular metalloproteinase 4 (642 aa).

A signal peptide spans 1–18; sequence MHGLLLAGLLALPLNVLA. Residues 19-253 constitute a propeptide that is removed on maturation; the sequence is HPTESHSSGI…VHSVVDYVSA (235 aa). The span at 49–60 shows a compositional bias: polar residues; the sequence is SDSLTGQDGQSF. The interval 49-72 is disordered; sequence SDSLTGQDGQSFTASSADADTSSG. A compositionally biased stretch (low complexity) spans 61–71; sequence TASSADADTSS. N419 carries N-linked (GlcNAc...) asparagine glycosylation. H436 serves as a coordination point for Zn(2+). Residue E437 is part of the active site. Position 440 (H440) interacts with Zn(2+). 2 N-linked (GlcNAc...) asparagine glycosylation sites follow: N509 and N602.

Belongs to the peptidase M36 family. The cofactor is Zn(2+).

It localises to the secreted. In terms of biological role, secreted metalloproteinase that allows assimilation of proteinaceous substrates and probably acts as a virulence factor. This is Extracellular metalloproteinase 4 (MEP4) from Arthroderma gypseum (strain ATCC MYA-4604 / CBS 118893) (Microsporum gypseum).